We begin with the raw amino-acid sequence, 354 residues long: Probable L-ascorbate-6-phosphate lactonase UlaG (354 aa).

It belongs to the UlaG family. It depends on a divalent metal cation as a cofactor.

It is found in the cytoplasm. The catalysed reaction is L-ascorbate 6-phosphate + H2O = 3-dehydro-L-gulonate 6-phosphate. It functions in the pathway cofactor degradation; L-ascorbate degradation; D-xylulose 5-phosphate from L-ascorbate: step 1/4. Its function is as follows. Probably catalyzes the hydrolysis of L-ascorbate-6-P into 3-keto-L-gulonate-6-P. Is essential for L-ascorbate utilization under anaerobic conditions. The sequence is that of Probable L-ascorbate-6-phosphate lactonase UlaG from Shigella boydii serotype 18 (strain CDC 3083-94 / BS512).